The sequence spans 131 residues: Glycine cleavage system H protein (131 aa).

In terms of domain architecture, Lipoyl-binding spans 24–106 (IATLGISAFA…HGEGWLLKVR (83 aa)). Lys-65 carries the N6-lipoyllysine modification.

It belongs to the GcvH family. The glycine cleavage system is composed of four proteins: P, T, L and H. (R)-lipoate serves as cofactor.

Functionally, the glycine cleavage system catalyzes the degradation of glycine. The H protein shuttles the methylamine group of glycine from the P protein to the T protein. This Microcystis aeruginosa (strain NIES-843 / IAM M-2473) protein is Glycine cleavage system H protein.